Here is a 1568-residue protein sequence, read N- to C-terminus: Agglutinin-like protein 7 (1568 aa).

A signal peptide spans 1–18; that stretch reads MKKLYLLYLLASFTTVIS. Cystine bridges form between Cys-74/Cys-151, Cys-97/Cys-113, Cys-206/Cys-299, and Cys-228/Cys-257. ALS repeat units lie at residues 403–434, 441–471, 476–507, and 512–543; these read TTLTTYWQESSTATTTYFDDIDLVDTVIVKIP, ITTQFWSGKYLTTETHKEPPLGTDSVIIKEP, VTTTEFWSESFATTETITNNPEGTDSVIIKEP, and VTTTKFWSESFATTETITTGPLGTDSIVIHDP. 3 disordered regions span residues 546-662, 721-743, and 767-832; these read ESSS…SSSS, LSSDTSSYYPSSTISPSDDFPHT, and VSLT…SIPT. Low complexity-rich tracts occupy residues 547–662, 721–738, 768–793, and 801–824; these read SSSS…SSSS, LSSDTSSYYPSSTISPSD, SLTSDPASSFDSSSRLNSDSSSSPST, and SSSFSTLIKSSESRESSSGTILSE. N-linked (GlcNAc...) asparagine glycosylation is present at Asn-559. An N-linked (GlcNAc...) asparagine glycan is attached at Asn-851. Disordered stretches follow at residues 860-1030 and 1046-1097; these read VVSS…VASE and EVVS…ENSD. Over residues 872–904 the composition is skewed to low complexity; that stretch reads ESSVSVTSESSESVTSESVASESVTSESVTAVS. Positions 909 to 918 are enriched in polar residues; the sequence is LYTTSEEVST. Residues 919-945 are compositionally biased toward low complexity; sequence SDSNSGMSSPIPSSEQRSSIPIMSSSD. The span at 956-992 shows a compositional bias: polar residues; the sequence is GTILSEESSDSIPTTFSTRYWSPSGMSSRHYTNSTET. N-linked (GlcNAc...) asparagine glycosylation occurs at Asn-988. Composition is skewed to low complexity over residues 993–1002 and 1009–1030; these read SVSDVVSSSV and ESSVSVISESSESVTSESVASE. Positions 1046 to 1062 are enriched in polar residues; the sequence is EVVSTSDSKIVPSTSVP. Residues 1063–1077 are compositionally biased toward low complexity; it reads SSEQRSSIPIMSSSD. A glycan (N-linked (GlcNAc...) asparagine) is linked at Asn-1188. Disordered stretches follow at residues 1194-1220 and 1271-1305; these read LGMSNSDDGLSEDTRSSSVAGKEEIEL and GLSDSDTFPSENSNRSRSFKESTDNTISISRESLG. 2 stretches are compositionally biased toward polar residues: residues 1272–1286 and 1294–1303; these read LSDSDTFPSENSNRS and DNTISISRES. A glycan (N-linked (GlcNAc...) asparagine) is linked at Asn-1284. Ser-1548 is lipidated: GPI-anchor amidated serine. The propeptide at 1549 to 1568 is removed in mature form; that stretch reads GSVSKYSLWMMAFYMLFGLF.

Belongs to the ALS family. Post-translationally, the GPI-anchor is attached to the protein in the endoplasmic reticulum and serves to target the protein to the cell surface. There, the glucosamine-inositol phospholipid moiety is cleaved off and the GPI-modified mannoprotein is covalently attached via its lipidless GPI glycan remnant to the 1,6-beta-glucan of the outer cell wall layer.

It localises to the cell membrane. The protein resides in the secreted. Its subcellular location is the cell wall. In terms of biological role, cell surface adhesion protein which mediates both yeast-to-host tissue adherence and yeast aggregation. Plays an important role in the pathogenesis of C.albicans infections. This is Agglutinin-like protein 7 (ALS7) from Candida albicans (strain SC5314 / ATCC MYA-2876) (Yeast).